Reading from the N-terminus, the 238-residue chain is Large ribosomal subunit protein uL1 (238 aa).

Belongs to the universal ribosomal protein uL1 family. In terms of assembly, part of the 50S ribosomal subunit.

Binds directly to 23S rRNA. The L1 stalk is quite mobile in the ribosome, and is involved in E site tRNA release. Its function is as follows. Protein L1 is also a translational repressor protein, it controls the translation of the L11 operon by binding to its mRNA. This Picosynechococcus sp. (strain ATCC 27264 / PCC 7002 / PR-6) (Agmenellum quadruplicatum) protein is Large ribosomal subunit protein uL1.